The chain runs to 202 residues: FMN-dependent NADH:quinone oxidoreductase (202 aa).

Residues S10 and 95-98 (MYNF) each bind FMN.

The protein belongs to the azoreductase type 1 family. In terms of assembly, homodimer. The cofactor is FMN.

It carries out the reaction 2 a quinone + NADH + H(+) = 2 a 1,4-benzosemiquinone + NAD(+). It catalyses the reaction N,N-dimethyl-1,4-phenylenediamine + anthranilate + 2 NAD(+) = 2-(4-dimethylaminophenyl)diazenylbenzoate + 2 NADH + 2 H(+). Functionally, quinone reductase that provides resistance to thiol-specific stress caused by electrophilic quinones. Also exhibits azoreductase activity. Catalyzes the reductive cleavage of the azo bond in aromatic azo compounds to the corresponding amines. The polypeptide is FMN-dependent NADH:quinone oxidoreductase (Alkalilimnicola ehrlichii (strain ATCC BAA-1101 / DSM 17681 / MLHE-1)).